The primary structure comprises 1935 residues: Myosin-7 (1935 aa).

The Myosin N-terminal SH3-like domain occupies 32-81; sequence DLKKDVFVPDDKEEFVKATILSREGGKVTAETEHGKTVTVKEDQVLQQNP. A Myosin motor domain is found at 85–778; the sequence is DKIEDMAMLT…LLGLLEEMRD (694 aa). Lys129 is modified (N6,N6,N6-trimethyllysine). 178–185 is a binding site for ATP; it reads GESGAGKT. Position 378 is a phosphothreonine (Thr378). Actin-binding regions lie at residues 655-677 and 757-771; these read LNKLMTNLRSTHPHFVRCIIPNE and KFGHTKVFFKAGLLG. The IQ domain maps to 781–810; it reads LSRIITRIQAQSRGVLSRMEFKKLLERRDS. The stretch at 839–1935 forms a coiled coil; it reads LLKSAETEKE…DIGTKGLNEE (1097 aa). Phosphoserine occurs at positions 1137 and 1269. Thr1282 is subject to Phosphothreonine. Tyr1308 carries the phosphotyrosine modification. Thr1309 is subject to Phosphothreonine. A Phosphoserine modification is found at Ser1510. Thr1513 is subject to Phosphothreonine. The interval 1907–1935 is disordered; the sequence is EERADIAESQVNKLRAKSRDIGTKGLNEE. Over residues 1923 to 1935 the composition is skewed to basic and acidic residues; sequence KSRDIGTKGLNEE.

Belongs to the TRAFAC class myosin-kinesin ATPase superfamily. Myosin family. As to quaternary structure, muscle myosin is a hexameric protein that consists of 2 heavy chain subunits (MHC), 2 alkali light chain subunits (MLC) and 2 regulatory light chain subunits (MLC-2). Interacts with ECPAS. Interacts (via C-terminus) with LRRC39.

The protein localises to the cytoplasm. The protein resides in the myofibril. Its subcellular location is the sarcomere. Myosins are actin-based motor molecules with ATPase activity essential for muscle contraction. Forms regular bipolar thick filaments that, together with actin thin filaments, constitute the fundamental contractile unit of skeletal and cardiac muscle. The sequence is that of Myosin-7 (MYH7) from Bos taurus (Bovine).